Consider the following 200-residue polypeptide: TATA-box-binding protein 2 (200 aa).

Tandem repeats lie at residues 25–101 (LQNI…ARIV) and 115–192 (IQNI…YPVL).

Belongs to the TBP family. As to quaternary structure, belongs to the TFIID complex together with the TBP-associated factors (TAFs). Binds DNA as monomer. Interacts with TAF1 (via N-terminus). Interacts with TFIIB1. Interacts with PTF2. Interacts with HAT5/ATHB-1 and ATHB-7. Component of a nuclear protein complex containing at least TATA binding proteins (TBPs, e.g. TBP1 and TBP2) and ATX1.

The protein resides in the nucleus. Functionally, general transcription factor (GTF) that functions at the core of the DNA-binding multiprotein factor TFIID. Binding of TFIID to the TATA box is the initial transcriptional step of the pre-initiation complex (PIC), playing a role in the activation of eukaryotic genes transcribed by RNA polymerase II. Interacts with TFIIB1 and is required for activated transcription and possibly basal transcription. May act as GTF of RNA polymerase I-dependent transcription and rRNA synthesis. Forms a ternary complex with PBRP1 and the rDNA promoter region. The sequence is that of TATA-box-binding protein 2 from Arabidopsis thaliana (Mouse-ear cress).